Here is an 814-residue protein sequence, read N- to C-terminus: Plakophilin-2 (814 aa).

Positions 1–329 (MAIPGSLGEC…MTLERAVNML (329 aa)) are required for binding to single-stranded DNA. S44 bears the Phosphoserine mark. The residue at position 46 (R46) is an Omega-N-methylarginine. 2 positions are modified to phosphoserine: S82 and S130. 8 ARM repeats span residues 200-240 (TCQH…SIKG), 309-352 (CDCL…ESFQ), 354-393 (SEAR…NLVF), 503-549 (PDGR…NLSY), 604-644 (PRGI…NLTA), 652-691 (SVAR…NLSR), 696-737 (QNEI…NLMQ), and 740-782 (YQNA…SLWA).

The protein belongs to the beta-catenin family. In terms of assembly, interacts with DSC2. Interacts with JUP. Interacts with KRT5/CK5, KRT8/CK8, KRT14/CK14, KRT18/CK18 and VIM. Interacts (via N-terminus) with MARK3/C-TAK1. Interacts with DSP. Interacts with DSG1, DSG2 and DSG3. Interacts (via N-terminus) with CTNNB1. Interacts with CDH1. Interacts with the RNA polymerase III (Pol III) complex proteins POLR3A/RPC155, POLR3F/RPC39 and POLR3C/RPC82. Interacts with CTNNA3. Interacts (via N-terminus) with SCN5A/Nav1.5. Interacts with ANK3/ANKG and GJA1/CX43. In terms of tissue distribution, expressed in the heart (at protein level).

It localises to the nucleus. The protein localises to the cell junction. The protein resides in the desmosome. Its subcellular location is the cytoplasm. A component of desmosome cell-cell junctions which are required for positive regulation of cellular adhesion. Regulates focal adhesion turnover resulting in changes in focal adhesion size, cell adhesion and cell spreading, potentially via transcriptional modulation of beta-integrins. Required to maintain gingival epithelial barrier function. Important component of the desmosome that is also required for localization of desmosome component proteins such as DSC2, DSG2 and JUP to the desmosome cell-cell junction. Required for the formation of desmosome cell junctions in cardiomyocytes, thereby required for the correct formation of the heart, specifically trabeculation and formation of the atria walls. Loss of desmosome cell junctions leads to mis-localization of DSP and DSG2 resulting in disruption of cell-cell adhesion and disordered intermediate filaments. Modulates profibrotic gene expression in cardiomyocytes via regulation of DSP expression and subsequent activation of downstream TGFB1 and MAPK14/p38 MAPK signaling. Required for cardiac sodium current propagation and electrical synchrony in cardiac myocytes, via ANK3 stabilization and modulation of SCN5A/Nav1.5 localization to cell-cell junctions. Required for mitochondrial function, nuclear envelope integrity and positive regulation of SIRT3 transcription via maintaining DES localization at its nuclear envelope and cell tip anchoring points, and thereby preserving regulation of the transcriptional program. Maintenance of nuclear envelope integrity protects against DNA damage and transcriptional dysregulation of genes, especially those involved in the electron transport chain, thereby preserving mitochondrial function and protecting against superoxide radical anion generation. Binds single-stranded DNA (ssDNA). May regulate the localization of GJA1 to gap junctions in intercalated disks of the heart. This Rattus norvegicus (Rat) protein is Plakophilin-2.